A 428-amino-acid chain; its full sequence is Cytochrome bc complex cytochrome b subunit (428 aa).

2 stretches are compositionally biased toward low complexity: residues 1–15 (MAENTPKPAAGTAPA) and 21–52 (APGAAKPAAPKAARPGAAKPAAKPAAPRAAAP). The tract at residues 1-72 (MAENTPKPAA…RPDPNPFKDS (72 aa)) is disordered. Basic and acidic residues predominate over residues 59–72 (PPVDRPDPNPFKDS). A helical transmembrane segment spans residues 110-130 (YFGGLGLFFFVIQILTGLLLL). Heme b is bound by residues histidine 161 and histidine 175. Helical transmembrane passes span 162 to 182 (AWSANLMIMMLFIHMFSTFFM), 193 to 213 (WVSGFVLLLLSLGFGFTGYLL), 260 to 280 (LHVVLLPGLVMLVLAAHLTLV), 312 to 331 (GIGWLIGFALLIYLAVMFPW), 369 to 389 (ELLAIILFTIGGVVWLLVPFI), and 401 to 421 (IFTIFGILVLAFLLINTYRVY). Histidine 261 and histidine 276 together coordinate heme b.

It belongs to the cytochrome b family. The cofactor is heme b.

It is found in the cell inner membrane. Its function is as follows. Component of the green S-bacteria bc complex, which consists of the Rieske protein and cytochrome b subunit but appears to lack a cytochrome c1-equivalent. This complex has a comparatively low redox potential. This is Cytochrome bc complex cytochrome b subunit (petB) from Chlorobaculum thiosulfatiphilum (Chlorobium limicola f.sp. thiosulfatophilum).